Reading from the N-terminus, the 92-residue chain is MKIPKERRTYCPNCRKHTVHEVLESKRRKASELKWGQRQFRRVTAGYRGYPRPLPSGNKPVKKLDLRLKCKECGKSHIKKKSFRAGRVEYVA.

Positions 11, 14, 70, and 73 each coordinate Zn(2+). The C4-type zinc finger occupies 11–73; that stretch reads CPNCRKHTVH…LDLRLKCKEC (63 aa).

The protein belongs to the eukaryotic ribosomal protein eL42 family. In terms of assembly, part of the 50S ribosomal subunit. Zn(2+) serves as cofactor.

Functionally, binds to the 23S rRNA. The sequence is that of Large ribosomal subunit protein eL42 from Methanothermobacter thermautotrophicus (strain ATCC 29096 / DSM 1053 / JCM 10044 / NBRC 100330 / Delta H) (Methanobacterium thermoautotrophicum).